The following is a 411-amino-acid chain: Probable glutamate dehydrogenase 3 (411 aa).

The active site involves K102.

The protein belongs to the Glu/Leu/Phe/Val dehydrogenases family.

It catalyses the reaction L-glutamate + NAD(+) + H2O = 2-oxoglutarate + NH4(+) + NADH + H(+). The enzyme catalyses L-glutamate + NADP(+) + H2O = 2-oxoglutarate + NH4(+) + NADPH + H(+). In Arabidopsis thaliana (Mouse-ear cress), this protein is Probable glutamate dehydrogenase 3 (GSH3).